A 623-amino-acid chain; its full sequence is Glutathione import ATP-binding protein GsiA (623 aa).

2 consecutive ABC transporter domains span residues 15–269 (VENL…RALL) and 314–564 (LRVR…RKLL). ATP-binding positions include 49–56 (GESGSGKS) and 357–364 (GESGSGKS).

The protein belongs to the ABC transporter superfamily. Glutathione importer (TC 3.A.1.5.11) family. The complex is composed of two ATP-binding proteins (GsiA), two transmembrane proteins (GsiC and GsiD) and a solute-binding protein (GsiB).

The protein resides in the cell inner membrane. It carries out the reaction glutathione(out) + ATP + H2O = glutathione(in) + ADP + phosphate + H(+). In terms of biological role, part of the ABC transporter complex GsiABCD involved in glutathione import. Responsible for energy coupling to the transport system. In Escherichia coli O157:H7, this protein is Glutathione import ATP-binding protein GsiA.